The sequence spans 535 residues: GMP synthase [glutamine-hydrolyzing] (535 aa).

The 191-residue stretch at 21–211 folds into the Glutamine amidotransferase type-1 domain; sequence LIVILDFGSQ…VYHICDCEPT (191 aa). The active-site Nucleophile is the C98. Catalysis depends on residues H185 and E187. Residues 212–410 form the GMPS ATP-PPase domain; sequence WTTAAFVEEA…LGLPEEIVQR (199 aa). 239-245 serves as a coordination point for ATP; it reads SGGVDSS.

Homodimer.

It catalyses the reaction XMP + L-glutamine + ATP + H2O = GMP + L-glutamate + AMP + diphosphate + 2 H(+). Its pathway is purine metabolism; GMP biosynthesis; GMP from XMP (L-Gln route): step 1/1. In terms of biological role, catalyzes the synthesis of GMP from XMP. In Thermosynechococcus vestitus (strain NIES-2133 / IAM M-273 / BP-1), this protein is GMP synthase [glutamine-hydrolyzing].